Consider the following 236-residue polypeptide: Small ribosomal subunit protein uS5 (236 aa).

Basic and acidic residues predominate over residues 1–10 (MTENNEKDIQ). Residues 1–64 (MTENNEKDIQ…GRDGGREAEK (64 aa)) form a disordered region. Residues 11 to 27 (VTEAVAAPATETAAPAT) are compositionally biased toward low complexity. A compositionally biased stretch (basic and acidic residues) spans 28-64 (TDDRRGGARRGERGDRGQGRGDRGGRGGRDGGREAEK). Positions 67 to 130 (FVERVVTINR…EEAKKSFFRV (64 aa)) constitute an S5 DRBM domain.

Belongs to the universal ribosomal protein uS5 family. In terms of assembly, part of the 30S ribosomal subunit. Contacts proteins S4 and S8.

Its function is as follows. With S4 and S12 plays an important role in translational accuracy. In terms of biological role, located at the back of the 30S subunit body where it stabilizes the conformation of the head with respect to the body. In Arthrobacter sp. (strain FB24), this protein is Small ribosomal subunit protein uS5.